Reading from the N-terminus, the 64-residue chain is Large ribosomal subunit protein bL35c (64 aa).

This sequence belongs to the bacterial ribosomal protein bL35 family.

The protein resides in the plastid. The protein localises to the chloroplast. This Trieres chinensis (Marine centric diatom) protein is Large ribosomal subunit protein bL35c.